A 191-amino-acid polypeptide reads, in one-letter code: Transcriptional regulator MET32 (191 aa).

Positions 70-96 (KKENALPKPPKSSKSKPQDRRNSTGEK) are disordered. Residues 85–96 (KPQDRRNSTGEK) are compositionally biased toward basic and acidic residues. The C2H2-type 1 zinc-finger motif lies at 98–120 (FKCAKCSLEFSRSSDLRRHEKTH). The segment at 126–150 (NICPQCGKGFARKDALKRHYDTLTC) adopts a C2H2-type 2; atypical zinc-finger fold.

In terms of assembly, interacts with MET4 and MET28.

The protein localises to the cytoplasm. It localises to the nucleus. In terms of biological role, auxiliary transcriptional regulator of sulfur amino acid metabolism. Involved in the transcriptional activation of MET28. The chain is Transcriptional regulator MET32 (MET32) from Saccharomyces cerevisiae (strain ATCC 204508 / S288c) (Baker's yeast).